Reading from the N-terminus, the 196-residue chain is UMP-CMP kinase (196 aa).

Gly13 to Thr18 contributes to the ATP binding site. Residues Ser33–Val63 form an NMP region. A ribonucleoside 5'-phosphate contacts are provided by residues Arg39, Lys61–Val63, and Gly93–Arg96. Residue Asn100 coordinates CMP. The LID stretch occupies residues Glu133–Asp143. Residue Arg134 coordinates ATP. A ribonucleoside 5'-phosphate-binding residues include Arg140 and Arg151. Arg179 provides a ligand contact to ATP.

It belongs to the adenylate kinase family. UMP-CMP kinase subfamily. Monomer. The cofactor is Mg(2+).

The protein localises to the nucleus. It localises to the cytoplasm. The catalysed reaction is CMP + ATP = CDP + ADP. It carries out the reaction dCMP + ATP = dCDP + ADP. It catalyses the reaction UMP + ATP = UDP + ADP. The enzyme catalyses a 2'-deoxyribonucleoside 5'-diphosphate + ATP = a 2'-deoxyribonucleoside 5'-triphosphate + ADP. The catalysed reaction is a ribonucleoside 5'-diphosphate + ATP = a ribonucleoside 5'-triphosphate + ADP. Catalyzes the phosphorylation of pyrimidine nucleoside monophosphates at the expense of ATP. Plays an important role in de novo pyrimidine nucleotide biosynthesis. Has preference for UMP and CMP as phosphate acceptors. Also displays broad nucleoside diphosphate kinase activity. This is UMP-CMP kinase (cmpk) from Danio rerio (Zebrafish).